We begin with the raw amino-acid sequence, 152 residues long: Putative pseudoazurin (152 aa).

The N-terminal stretch at Met-1–Ala-23 is a signal peptide. The Plastocyanin-like domain occupies Val-28 to Gly-116. Residues His-63, Cys-101, His-104, and Met-109 each contribute to the Cu cation site.

Requires Cu cation as cofactor.

It is found in the periplasm. Its function is as follows. This soluble electron transfer copper protein is required for the inactivation of copper-containing nitrite reductase in the presence of oxygen. This is Putative pseudoazurin (azu) from Rhizobium leguminosarum bv. viciae.